We begin with the raw amino-acid sequence, 692 residues long: MFYFRGCGRWVAASFTKLQFPLARLSSDSTAPRTPHFDVIVIGGGHAGTEAATAAARCGSRTLLLTHRVDTIGQMSCNPSFGGIGKGHLMREVDALDGLCSRICDQSGVHYKVLNRRKGPAVWGLRAQIDRKLYKQNMQKEILNTPLLTVQEGAVEDLILTEPEPEHTGKCRVSGVVLVDGSTVYAESVILTTGTFLRGIIVIGLETHPAGRLGDQPSIGLAQTLEKLGFVVGRLKTGTPPRIAKESINFSILNKHTPDNPSIPFSFTNETVWIKPEDQLPCYLTHTNPRVDEIVLKNLHLNSHVKETTRGPRYCPSIESKVLRFPNRLHQVWLEPEGMDSDLIYPQGLSMTLPAELQEKMITCIRGLEKAKVIQPGYGVQYDYLDPRQITPSLETHLVQRLFFAGQINGTTGYEEAAAQGVIAGINASLRVSRKPPFVVSRTEGYIGVLIDDLTTLGTSEPYRMFTSRVEFRLSLRPDNADSRLTLRGYKDAGCVSQQRYERACWMKSSLEEGISVLKSIEFSSSKWKKLIPEASISTSRSLPVRALDVLKYEEVDMDSLAKAVPEPLKKYTKCRELAERLKIEATYESVLFHQLQEIKGVQQDEALQLPKDLDYLTIRDVSLSHEVREKLHFSRPQTIGAASRIPGVTPAAIINLLRFVKTTQRRQAAMNESSKTDQYLCDADRLREREL.

The transit peptide at Met1–Leu25 directs the protein to the mitochondrion. Residues Gly43–Gly48, Val155, Ser218, and Gln407 each bind FAD. At Lys508 the chain carries N6-methyllysine.

The protein belongs to the MnmG family. In terms of assembly, homodimer; forms a dimer in the presence of potassium. Interacts with GTPBP3; forms the GTPBP3-MTO1 complex composed of homodimers of GTPBP3 and MTO1. Requires FAD as cofactor.

It is found in the mitochondrion. The catalysed reaction is 5,10-methylenetetrahydrofolate + uridine(34) in tRNA + taurine + GTP + A + H2O = 5-taurinomethyluridine(34) in tRNA + 7,8-dihydrofolate + GDP + AH2 + phosphate + H(+). Its function is as follows. Component of the GTPBP3-MTO1 complex that catalyzes the 5-taurinomethyluridine (taum(5)U) modification at the 34th wobble position (U34) of mitochondrial tRNAs (mt-tRNAs), which plays a role in mt-tRNA decoding and mitochondrial translation. Taum(5)U formation on mammalian mt-tRNA requires the presence of both GTPBP3-mediated GTPase activity and MTO1 catalytic activity. The polypeptide is 5-taurinomethyluridine-[tRNA] synthase subunit MTO1, mitochondrial (MTO1) (Pongo abelii (Sumatran orangutan)).